We begin with the raw amino-acid sequence, 469 residues long: MDYLPIFTDLKRRPCLVVGGGDVAWRKARMLLKAGADVRVIAPVLNQAFQQAIEQQQVSHVADEFESSHLDGIFLAIAATDRKAVNALVYQSANQRQVLVNVVDDTQRCSFIIPSIIDRSPIIVAVSSSGKAPVLARLIREKLEALLPQHLGRMATIAGNFRARLAKTVTSFSARRQFWEQVFDGRFSDLVACGQEQDAKQELINLTQSTSPQGQVALIGSGPGDAGLLTLRALQLMQQADVVLYDYLVSDEVMDLVRRDAELVCVGKKAGFHSVPQEETNQLIVKYAQQGKRVVRLKGGDPFVFGRGGEELEVLFDANILFQVVPGITAAAGATAYAGIPLTHRDYAQTAMFVTGHLKAESDQMDWSTLARGKQTLVIYMGLMKSGHIQQQLLINGRAGDTPIAIIERGTQKKQKVIKGQLSELEQLAKNAESPSLIVIGEVVNLSEKLHWFGKQEQSLQQSAVVKLA.

A precorrin-2 dehydrogenase /sirohydrochlorin ferrochelatase region spans residues 1-203; sequence MDYLPIFTDL…GQEQDAKQEL (203 aa). Residues 22–23 and 43–44 contribute to the NAD(+) site; these read DV and PV. Ser-128 carries the phosphoserine modification. Residues 214–469 are uroporphyrinogen-III C-methyltransferase; it reads GQVALIGSGP…LQQSAVVKLA (256 aa). Residue Pro-223 coordinates S-adenosyl-L-methionine. Catalysis depends on Asp-246, which acts as the Proton acceptor. Lys-268 (proton donor) is an active-site residue. S-adenosyl-L-methionine-binding positions include 299–301, Val-304, 329–330, Met-381, and Gly-410; these read GGD and TA.

It in the N-terminal section; belongs to the precorrin-2 dehydrogenase / sirohydrochlorin ferrochelatase family. In the C-terminal section; belongs to the precorrin methyltransferase family.

It catalyses the reaction uroporphyrinogen III + 2 S-adenosyl-L-methionine = precorrin-2 + 2 S-adenosyl-L-homocysteine + H(+). The enzyme catalyses precorrin-2 + NAD(+) = sirohydrochlorin + NADH + 2 H(+). The catalysed reaction is siroheme + 2 H(+) = sirohydrochlorin + Fe(2+). It functions in the pathway cofactor biosynthesis; adenosylcobalamin biosynthesis; precorrin-2 from uroporphyrinogen III: step 1/1. The protein operates within cofactor biosynthesis; adenosylcobalamin biosynthesis; sirohydrochlorin from precorrin-2: step 1/1. Its pathway is porphyrin-containing compound metabolism; siroheme biosynthesis; precorrin-2 from uroporphyrinogen III: step 1/1. It participates in porphyrin-containing compound metabolism; siroheme biosynthesis; siroheme from sirohydrochlorin: step 1/1. It functions in the pathway porphyrin-containing compound metabolism; siroheme biosynthesis; sirohydrochlorin from precorrin-2: step 1/1. Its function is as follows. Multifunctional enzyme that catalyzes the SAM-dependent methylations of uroporphyrinogen III at position C-2 and C-7 to form precorrin-2 via precorrin-1. Then it catalyzes the NAD-dependent ring dehydrogenation of precorrin-2 to yield sirohydrochlorin. Finally, it catalyzes the ferrochelation of sirohydrochlorin to yield siroheme. The sequence is that of Siroheme synthase from Photobacterium profundum (strain SS9).